Consider the following 206-residue polypeptide: Small ribosomal subunit protein uS4 (206 aa).

The S4 RNA-binding domain occupies 96–156 (GRLDNVVYRM…EKAKQQARIK (61 aa)).

It belongs to the universal ribosomal protein uS4 family. In terms of assembly, part of the 30S ribosomal subunit. Contacts protein S5. The interaction surface between S4 and S5 is involved in control of translational fidelity.

Functionally, one of the primary rRNA binding proteins, it binds directly to 16S rRNA where it nucleates assembly of the body of the 30S subunit. In terms of biological role, with S5 and S12 plays an important role in translational accuracy. This is Small ribosomal subunit protein uS4 from Vibrio campbellii (strain ATCC BAA-1116).